The sequence spans 100 residues: Probable steroid-binding protein 3 (100 aa).

An N-acetylmethionine modification is found at M1. One can recognise a Cytochrome b5 heme-binding domain in the interval 1-82 (MEFTAEQLSQ…LTEKEINTLN (82 aa)). A sterol-binding region spans residues 1–82 (MEFTAEQLSQ…LTEKEINTLN (82 aa)).

The protein belongs to the cytochrome b5 family. MAPR subfamily.

The protein resides in the nucleus. The sequence is that of Probable steroid-binding protein 3 (MP3) from Arabidopsis thaliana (Mouse-ear cress).